Here is a 248-residue protein sequence, read N- to C-terminus: UPF0736 protein BCB4264_A1231 (248 aa).

It belongs to the UPF0736 family.

This Bacillus cereus (strain B4264) protein is UPF0736 protein BCB4264_A1231.